Here is a 98-residue protein sequence, read N- to C-terminus: Cystatin-A (98 aa).

At Met1 the chain carries N-acetylmethionine. Residues Gln46–Gly50 carry the Secondary area of contact motif.

It belongs to the cystatin family. In terms of tissue distribution, expressed in the skin throughout the epidermis.

The protein resides in the cytoplasm. Its function is as follows. This is an intracellular thiol proteinase inhibitor. Has an important role in desmosome-mediated cell-cell adhesion in the lower levels of the epidermis. This Homo sapiens (Human) protein is Cystatin-A (CSTA).